The chain runs to 171 residues: Small ribosomal subunit protein uS4 (171 aa).

The S4 RNA-binding domain maps to 101–165; it reads RRLQTVVYRK…SSLSDELHPE (65 aa). A disordered region spans residues 148 to 171; sequence SSVGFDEHSSLSDELHPERAEAQE. A compositionally biased stretch (basic and acidic residues) spans 152–171; that stretch reads FDEHSSLSDELHPERAEAQE.

This sequence belongs to the universal ribosomal protein uS4 family. In terms of assembly, part of the 30S ribosomal subunit. Contacts protein S5. The interaction surface between S4 and S5 is involved in control of translational fidelity.

Its function is as follows. One of the primary rRNA binding proteins, it binds directly to 16S rRNA where it nucleates assembly of the body of the 30S subunit. With S5 and S12 plays an important role in translational accuracy. The sequence is that of Small ribosomal subunit protein uS4 from Haloarcula marismortui (strain ATCC 43049 / DSM 3752 / JCM 8966 / VKM B-1809) (Halobacterium marismortui).